The primary structure comprises 846 residues: MAP7 domain-containing protein 1 (846 aa).

2 disordered regions span residues 1 to 153 (MESG…ERAK) and 186 to 210 (EQRL…EKNK). Positions 24-41 (EPRPSPEGDPSPPPPPTP) are enriched in pro residues. Residues T49 and T53 each carry the phosphothreonine modification. S95 carries the post-translational modification Phosphoserine. T99 is subject to Phosphothreonine. Positions 113 to 123 (RSSQPSPTTVP) are enriched in low complexity. Residues S115 and S118 each carry the phosphoserine modification. Residue T120 is modified to Phosphothreonine. A phosphoserine mark is found at S125 and S127. The stretch at 130–224 (AKQDVKKAGE…AAIQRSVKKT (95 aa)) forms a coiled coil. The span at 132-153 (QDVKKAGERHKLAKERREERAK) shows a compositional bias: basic and acidic residues. 5 positions are modified to phosphoserine: S256, S275, S315, S368, and S401. Residues 318–816 (TLPRNGRDQG…KGTAGDKSLG (499 aa)) form a disordered region. Basic and acidic residues predominate over residues 407-437 (RRLEATPVQKKEKKDKERENEKEKSALARER). The stretch at 414-443 (VQKKEKKDKERENEKEKSALARERNLKKRQ) forms a coiled coil. S444, S448, S454, and S460 each carry phosphoserine. Positions 460 to 471 (SPKSKARPSSPS) are enriched in low complexity. A Glycyl lysine isopeptide (Lys-Gly) (interchain with G-Cter in SUMO2) cross-link involves residue K462. Residues S479 and S496 each carry the phosphoserine modification. Residues 479 to 497 (SPCPSPGPGHALPPKPPSP) are compositionally biased toward pro residues. Residues 523–539 (PEDKNHRKSRAAEEKEP) are compositionally biased toward basic and acidic residues. The span at 542–556 (PASPAPSPVPSPTPA) shows a compositional bias: pro residues. A phosphoserine mark is found at S544, S548, and S552. A Phosphothreonine modification is found at T554. Residues 568-579 (PAETAVPAVPAA) show a composition bias toward low complexity. A coiled-coil region spans residues 599 to 740 (TTDREEATRL…AETKKQDAKE (142 aa)). Basic and acidic residues predominate over residues 600-740 (TDREEATRLL…AETKKQDAKE (141 aa)). The residue at position 818 (T818) is a Phosphothreonine.

Belongs to the MAP7 family.

The protein resides in the cytoplasm. The protein localises to the cytoskeleton. Its subcellular location is the spindle. It is found in the microtubule organizing center. It localises to the centrosome. The protein resides in the midbody. Its function is as follows. Microtubule-stabilizing protein involved in the control of cell motility and neurite outgrowth. Facilitate microtubule stabilization through the maintenance of acetylated stable microtubules. This is MAP7 domain-containing protein 1 (Map7d1) from Mus musculus (Mouse).